A 487-amino-acid polypeptide reads, in one-letter code: Glutamyl-tRNA(Gln) amidotransferase subunit A (487 aa).

Active-site charge relay system residues include Lys-79 and Ser-154. The active-site Acyl-ester intermediate is the Ser-178.

It belongs to the amidase family. GatA subfamily. As to quaternary structure, heterotrimer of A, B and C subunits.

It carries out the reaction L-glutamyl-tRNA(Gln) + L-glutamine + ATP + H2O = L-glutaminyl-tRNA(Gln) + L-glutamate + ADP + phosphate + H(+). Functionally, allows the formation of correctly charged Gln-tRNA(Gln) through the transamidation of misacylated Glu-tRNA(Gln) in organisms which lack glutaminyl-tRNA synthetase. The reaction takes place in the presence of glutamine and ATP through an activated gamma-phospho-Glu-tRNA(Gln). The polypeptide is Glutamyl-tRNA(Gln) amidotransferase subunit A (Heliobacterium modesticaldum (strain ATCC 51547 / Ice1)).